The chain runs to 371 residues: Queuine tRNA-ribosyltransferase (371 aa).

Aspartate 90 serves as the catalytic Proton acceptor. Substrate is bound by residues 90–94 (DSGGF), aspartate 144, glutamine 189, and glycine 215. The segment at 246-252 (GVGTPEN) is RNA binding. Aspartate 265 serves as the catalytic Nucleophile. The segment at 270–274 (TRNAR) is RNA binding; important for wobble base 34 recognition. Zn(2+)-binding residues include cysteine 303, cysteine 305, cysteine 308, and histidine 334.

The protein belongs to the queuine tRNA-ribosyltransferase family. In terms of assembly, homodimer. Within each dimer, one monomer is responsible for RNA recognition and catalysis, while the other monomer binds to the replacement base PreQ1. Zn(2+) is required as a cofactor.

It carries out the reaction 7-aminomethyl-7-carbaguanine + guanosine(34) in tRNA = 7-aminomethyl-7-carbaguanosine(34) in tRNA + guanine. It participates in tRNA modification; tRNA-queuosine biosynthesis. Its function is as follows. Catalyzes the base-exchange of a guanine (G) residue with the queuine precursor 7-aminomethyl-7-deazaguanine (PreQ1) at position 34 (anticodon wobble position) in tRNAs with GU(N) anticodons (tRNA-Asp, -Asn, -His and -Tyr). Catalysis occurs through a double-displacement mechanism. The nucleophile active site attacks the C1' of nucleotide 34 to detach the guanine base from the RNA, forming a covalent enzyme-RNA intermediate. The proton acceptor active site deprotonates the incoming PreQ1, allowing a nucleophilic attack on the C1' of the ribose to form the product. After dissociation, two additional enzymatic reactions on the tRNA convert PreQ1 to queuine (Q), resulting in the hypermodified nucleoside queuosine (7-(((4,5-cis-dihydroxy-2-cyclopenten-1-yl)amino)methyl)-7-deazaguanosine). This Helicobacter pylori (strain Shi470) protein is Queuine tRNA-ribosyltransferase.